We begin with the raw amino-acid sequence, 354 residues long: 4-hydroxy-3-methylbut-2-en-1-yl diphosphate synthase (flavodoxin) (354 aa).

4 residues coordinate [4Fe-4S] cluster: Cys-263, Cys-266, Cys-298, and Glu-305.

This sequence belongs to the IspG family. It depends on [4Fe-4S] cluster as a cofactor.

It carries out the reaction (2E)-4-hydroxy-3-methylbut-2-enyl diphosphate + oxidized [flavodoxin] + H2O + 2 H(+) = 2-C-methyl-D-erythritol 2,4-cyclic diphosphate + reduced [flavodoxin]. The protein operates within isoprenoid biosynthesis; isopentenyl diphosphate biosynthesis via DXP pathway; isopentenyl diphosphate from 1-deoxy-D-xylulose 5-phosphate: step 5/6. Functionally, converts 2C-methyl-D-erythritol 2,4-cyclodiphosphate (ME-2,4cPP) into 1-hydroxy-2-methyl-2-(E)-butenyl 4-diphosphate. The chain is 4-hydroxy-3-methylbut-2-en-1-yl diphosphate synthase (flavodoxin) from Fusobacterium nucleatum subsp. nucleatum (strain ATCC 25586 / DSM 15643 / BCRC 10681 / CIP 101130 / JCM 8532 / KCTC 2640 / LMG 13131 / VPI 4355).